Reading from the N-terminus, the 339-residue chain is N-acetyl-gamma-glutamyl-phosphate reductase 1 (339 aa).

The active site involves C149.

The protein belongs to the NAGSA dehydrogenase family. Type 1 subfamily.

The protein localises to the cytoplasm. The enzyme catalyses N-acetyl-L-glutamate 5-semialdehyde + phosphate + NADP(+) = N-acetyl-L-glutamyl 5-phosphate + NADPH + H(+). The protein operates within amino-acid biosynthesis; L-arginine biosynthesis; N(2)-acetyl-L-ornithine from L-glutamate: step 3/4. Catalyzes the NADPH-dependent reduction of N-acetyl-5-glutamyl phosphate to yield N-acetyl-L-glutamate 5-semialdehyde. The protein is N-acetyl-gamma-glutamyl-phosphate reductase 1 of Lactiplantibacillus plantarum (strain ATCC BAA-793 / NCIMB 8826 / WCFS1) (Lactobacillus plantarum).